Consider the following 66-residue polypeptide: Large ribosomal subunit protein uL29 (66 aa).

Belongs to the universal ribosomal protein uL29 family. In terms of assembly, part of the 50S ribosomal subunit.

In Bacillus subtilis (strain 168), this protein is Large ribosomal subunit protein uL29 (rpmC).